The chain runs to 720 residues: MVDAMPENPAEEPTAASAAPNPEAVPDAVGQPEAPVKDRKVPGEYGASAITVLEGLEAVRKRPGMYIGSTGPRGLHHLVYEVVDNSVDEALAGYATGIDVTLQADGGVRVADDGRGIPVDLHPTEGRPTVEVVMTILHAGGKFGGGGYAVSGGLHGVGISVVNALSRRVDTEVRRQGHVWRMSFADGGVPQGELVKGEATDATGTVQTFYPDAEIFDSIEFDYETLRARFQQMAFLNKGLRITLTDERVQESNEVVDDEIAGEGAAGEDVAENGLAEDAEQEPQRRSVTYLYENGLLDYVQHLNSAKKVEYVHDDVIAFEAEDFSDGRSMAVEVAMQWTSAYSESVHTYANTINTHEGGTHEEGFRAALTSLVNRYAREKEILKPKEDNLSGEDIREGLTAVISVKLSEPQFEGQTKTKLGNSEARGFVSKAVTDHLGDWFERNPGPAKEIIRKAIMASHARLAARKARDNARRKSPLESFGMPGKLADCSSKDPERCEVYIVEGDSAGGSAKQGRNPETQAILPLRGKILNVERARLDKALGNAEIQSMITAFGTNIGEEFDISKLRYHKIVLMADADVDGQHITTLLLTVLFRYMRPLIEAGHVFLAQPPLYRIKWSNAPHDYVFSDEERDAAVEAGLAKGWRYPKDNGVQRYKGLGEMNYQELWDTTMDPEHRTLLQVTMEDAAAADAVFSMLMGEDVESRRTFIQQNAKDIRFLDV.

A compositionally biased stretch (low complexity) spans 1-26 (MVDAMPENPAEEPTAASAAPNPEAVP). A disordered region spans residues 1-42 (MVDAMPENPAEEPTAASAAPNPEAVPDAVGQPEAPVKDRKVP). A Toprim domain is found at 498–612 (CEVYIVEGDS…AGHVFLAQPP (115 aa)). Mg(2+) is bound by residues glutamate 504, aspartate 577, and aspartate 579.

This sequence belongs to the type II topoisomerase GyrB family. In terms of assembly, heterotetramer, composed of two GyrA and two GyrB chains. In the heterotetramer, GyrA contains the active site tyrosine that forms a transient covalent intermediate with the DNA, while GyrB binds cofactors and catalyzes ATP hydrolysis. Requires Mg(2+) as cofactor. It depends on Mn(2+) as a cofactor. Ca(2+) is required as a cofactor.

Its subcellular location is the cytoplasm. The enzyme catalyses ATP-dependent breakage, passage and rejoining of double-stranded DNA.. Its activity is regulated as follows. Supercoiling activity inhibited by novobiocin and coumermycin, DNA wrapping around gyrase is not inhibited. Functionally, a type II topoisomerase that negatively supercoils DNA in an ATP-dependent manner. About 140 bp of DNA wraps around gyrase in the presence or absence of ATP, when ATP is added negative supercoils are made. In terms of biological role, a type II topoisomerase that negatively supercoils closed circular double-stranded (ds) DNA in an ATP-dependent manner to modulate DNA topology and maintain chromosomes in an underwound state. Negative supercoiling favors strand separation, and DNA replication, transcription, recombination and repair, all of which involve strand separation. Also able to catalyze the interconversion of other topological isomers of dsDNA rings, including catenanes and knotted rings. Type II topoisomerases break and join 2 DNA strands simultaneously in an ATP-dependent manner. This is DNA gyrase subunit B from Micrococcus luteus (strain ATCC 4698 / DSM 20030 / JCM 1464 / CCM 169 / CCUG 5858 / IAM 1056 / NBRC 3333 / NCIMB 9278 / NCTC 2665 / VKM Ac-2230) (Micrococcus lysodeikticus).